The sequence spans 128 residues: NADH dehydrogenase [ubiquinone] 1 beta subcomplex subunit 6 (128 aa).

An N-acetylserine modification is found at S2. Residue K24 is modified to N6-acetyllysine. A helical membrane pass occupies residues 64-86 (TYRHSIFAFTHVLIPVWIIHYYL).

It belongs to the complex I NDUFB6 subunit family. Complex I is composed of 45 different subunits.

It localises to the mitochondrion inner membrane. In terms of biological role, accessory subunit of the mitochondrial membrane respiratory chain NADH dehydrogenase (Complex I), that is believed not to be involved in catalysis. Complex I functions in the transfer of electrons from NADH to the respiratory chain. The immediate electron acceptor for the enzyme is believed to be ubiquinone. The sequence is that of NADH dehydrogenase [ubiquinone] 1 beta subcomplex subunit 6 (NDUFB6) from Bos taurus (Bovine).